The chain runs to 134 residues: Large-conductance mechanosensitive channel (134 aa).

2 helical membrane passes run 16–36 (VIDL…VTAL) and 81–101 (GDFI…FIVV).

This sequence belongs to the MscL family. Homopentamer.

Its subcellular location is the cell inner membrane. Functionally, channel that opens in response to stretch forces in the membrane lipid bilayer. May participate in the regulation of osmotic pressure changes within the cell. The sequence is that of Large-conductance mechanosensitive channel from Stenotrophomonas maltophilia (strain K279a).